Consider the following 463-residue polypeptide: UDP-N-acetylmuramoylalanine--D-glutamate ligase (463 aa).

ATP is bound at residue glycine 109 to threonine 115.

It belongs to the MurCDEF family.

The protein resides in the cytoplasm. It catalyses the reaction UDP-N-acetyl-alpha-D-muramoyl-L-alanine + D-glutamate + ATP = UDP-N-acetyl-alpha-D-muramoyl-L-alanyl-D-glutamate + ADP + phosphate + H(+). It functions in the pathway cell wall biogenesis; peptidoglycan biosynthesis. Cell wall formation. Catalyzes the addition of glutamate to the nucleotide precursor UDP-N-acetylmuramoyl-L-alanine (UMA). The chain is UDP-N-acetylmuramoylalanine--D-glutamate ligase from Leptospira interrogans serogroup Icterohaemorrhagiae serovar copenhageni (strain Fiocruz L1-130).